Consider the following 141-residue polypeptide: Hemoglobin subunit beta (141 aa).

In terms of domain architecture, Globin spans His-2 to His-141. Heme b-binding residues include His-58 and His-87.

It belongs to the globin family. Heterotetramer of two alpha chains and two beta chains. Red blood cells.

In terms of biological role, involved in oxygen transport from the lung to the various peripheral tissues. This is Hemoglobin subunit beta (HBB) from Heterodontus portusjacksoni (Port Jackson shark).